Here is a 245-residue protein sequence, read N- to C-terminus: Large ribosomal subunit protein eL29 (245 aa).

Residues 1-26 (MAKSKNHTTHNQSRKWHRNGIKKPRS) show a composition bias toward basic residues. Disordered stretches follow at residues 1–33 (MAKS…ESLK) and 114–245 (RGLR…AKAP). An N6-methyllysine modification is found at K5. At S31 the chain carries Phosphoserine. N6-acetyllysine is present on K33. Low complexity predominate over residues 134–150 (KGKVKAQIKAQAQAQIK). Over residues 157–171 (AQAETKPKAQAETKP) the composition is skewed to basic and acidic residues. Low complexity-rich tracts occupy residues 172-226 (KAQA…ATPA) and 234-245 (PPKGAQPPAKAP).

Belongs to the eukaryotic ribosomal protein eL29 family. Component of the large ribosomal subunit.

The protein localises to the cytoplasm. Component of the large ribosomal subunit. The ribosome is a large ribonucleoprotein complex responsible for the synthesis of proteins in the cell. In Oryctolagus cuniculus (Rabbit), this protein is Large ribosomal subunit protein eL29 (RPL29).